Here is a 238-residue protein sequence, read N- to C-terminus: Type III pantothenate kinase (238 aa).

Residue 7–14 (DAGNSGLK) coordinates ATP. Substrate-binding positions include Tyr-88 and 95–98 (GVDR). Asp-97 (proton acceptor) is an active-site residue. Asp-117 contributes to the K(+) binding site. Position 120 (Thr-120) interacts with ATP. Thr-172 serves as a coordination point for substrate.

The protein belongs to the type III pantothenate kinase family. Homodimer. It depends on NH4(+) as a cofactor. K(+) serves as cofactor.

The protein localises to the cytoplasm. It catalyses the reaction (R)-pantothenate + ATP = (R)-4'-phosphopantothenate + ADP + H(+). It participates in cofactor biosynthesis; coenzyme A biosynthesis; CoA from (R)-pantothenate: step 1/5. Functionally, catalyzes the phosphorylation of pantothenate (Pan), the first step in CoA biosynthesis. The chain is Type III pantothenate kinase from Hahella chejuensis (strain KCTC 2396).